The sequence spans 554 residues: Hydroxylamine reductase (554 aa).

[2Fe-2S] cluster contacts are provided by C3, C6, C18, and C25. The hybrid [4Fe-2O-2S] cluster site is built by H252, E276, C320, C408, C436, C461, E495, and K497. Position 408 is a cysteine persulfide (C408).

The protein belongs to the HCP family. Requires [2Fe-2S] cluster as cofactor. The cofactor is hybrid [4Fe-2O-2S] cluster.

Its subcellular location is the cytoplasm. The enzyme catalyses A + NH4(+) + H2O = hydroxylamine + AH2 + H(+). Functionally, catalyzes the reduction of hydroxylamine to form NH(3) and H(2)O. The protein is Hydroxylamine reductase of Shewanella oneidensis (strain ATCC 700550 / JCM 31522 / CIP 106686 / LMG 19005 / NCIMB 14063 / MR-1).